Here is a 292-residue protein sequence, read N- to C-terminus: MTDMPSVTTPALDRYAVFGNPIGHSKSPFIHGQFASLTQQTLSYEAILAPIDGFEASLRAFFQAGGKGANVTVPFKEQAFALCDSLSAEATLAGAVNTLSLLADGTIYGDNTDGLGLVADLVRHLGSLQHKRVLLVGAGGAARGCILPLLKAEVGQLVITNRTQSKAQALVDIFSQVQEGRYSDKLQAVSMSELSGVFDLVINSTSASLAGELPPLSQSIIGNKTACYDMMYGAKPTAFNQWALQQGAAQVIDGLGMLVGQAAKSFALWRGVEPDTSGVLKLLRDKLQVDAQ.

Shikimate contacts are provided by residues Ser25–Ser27 and Thr72. The Proton acceptor role is filled by Lys76. Asn97 and Asp113 together coordinate shikimate. NADP(+) contacts are provided by residues Gly137–Ala141, Asn161–Lys166, and Met230. Tyr232 contacts shikimate. Gly254 provides a ligand contact to NADP(+).

It belongs to the shikimate dehydrogenase family. Homodimer.

The catalysed reaction is shikimate + NADP(+) = 3-dehydroshikimate + NADPH + H(+). It functions in the pathway metabolic intermediate biosynthesis; chorismate biosynthesis; chorismate from D-erythrose 4-phosphate and phosphoenolpyruvate: step 4/7. Involved in the biosynthesis of the chorismate, which leads to the biosynthesis of aromatic amino acids. Catalyzes the reversible NADPH linked reduction of 3-dehydroshikimate (DHSA) to yield shikimate (SA). The protein is Shikimate dehydrogenase (NADP(+)) of Shewanella sp. (strain ANA-3).